The chain runs to 217 residues: Probable nicotinate-nucleotide adenylyltransferase (217 aa).

Belongs to the NadD family.

The catalysed reaction is nicotinate beta-D-ribonucleotide + ATP + H(+) = deamido-NAD(+) + diphosphate. It participates in cofactor biosynthesis; NAD(+) biosynthesis; deamido-NAD(+) from nicotinate D-ribonucleotide: step 1/1. Its function is as follows. Catalyzes the reversible adenylation of nicotinate mononucleotide (NaMN) to nicotinic acid adenine dinucleotide (NaAD). The sequence is that of Probable nicotinate-nucleotide adenylyltransferase from Baumannia cicadellinicola subsp. Homalodisca coagulata.